The chain runs to 448 residues: Phosphoglucosamine mutase (448 aa).

The Phosphoserine intermediate role is filled by S100. The Mg(2+) site is built by S100, D240, D242, and D244. Phosphoserine is present on S100.

It belongs to the phosphohexose mutase family. Homodimer, may form a complex with CdaA. The cofactor is Mg(2+). Activated by phosphorylation.

The enzyme catalyses alpha-D-glucosamine 1-phosphate = D-glucosamine 6-phosphate. Catalyzes the conversion of glucosamine-6-phosphate to glucosamine-1-phosphate. Glucosamine-1-phosphate is used for cell wall biosynthesis. This is Phosphoglucosamine mutase from Bacillus subtilis (strain 168).